We begin with the raw amino-acid sequence, 492 residues long: GlcNAc-binding protein A (492 aa).

Residues 1–23 (MNKSSTKTLIALSMMAVSSGVSA) form the signal peptide. A Chitin-binding type-4 domain is found at 24 to 204 (HGYVSETNDG…AFYNVIDVKF (181 aa)). One can recognise a Chitin-binding type-3 domain in the interval 443 to 484 (AGTKVLAEDSNVYQCKEFPYSGYCVQWTETATNFAPGVGSDW).

The protein belongs to the GbpA family.

The protein localises to the secreted. In terms of biological role, probably interacts with GlcNAc residues. May promote attachment to both epithelial cell surfaces and chitin. This chain is GlcNAc-binding protein A, found in Aliivibrio fischeri (strain MJ11) (Vibrio fischeri).